The sequence spans 265 residues: Hydroxyethylthiazole kinase (265 aa).

Substrate is bound at residue M50. Residues R125 and T171 each contribute to the ATP site. G198 serves as a coordination point for substrate.

This sequence belongs to the Thz kinase family. Mg(2+) is required as a cofactor.

It catalyses the reaction 5-(2-hydroxyethyl)-4-methylthiazole + ATP = 4-methyl-5-(2-phosphooxyethyl)-thiazole + ADP + H(+). The protein operates within cofactor biosynthesis; thiamine diphosphate biosynthesis; 4-methyl-5-(2-phosphoethyl)-thiazole from 5-(2-hydroxyethyl)-4-methylthiazole: step 1/1. Functionally, catalyzes the phosphorylation of the hydroxyl group of 4-methyl-5-beta-hydroxyethylthiazole (THZ). In Salmonella paratyphi B (strain ATCC BAA-1250 / SPB7), this protein is Hydroxyethylthiazole kinase.